A 322-amino-acid chain; its full sequence is Eukaryotic translation initiation factor 3 subunit I (322 aa).

WD repeat units lie at residues 4-43, 46-85, 141-180, 184-223, and 281-322; these read GHER…RLGT, GHQG…VIAS, MTES…KVVD, DHSA…CLKS, and GHFG…NIFE.

Belongs to the eIF-3 subunit I family. In terms of assembly, component of the eukaryotic translation initiation factor 3 (eIF-3) complex. The eIF-3 complex interacts with pix.

The protein localises to the cytoplasm. In terms of biological role, component of the eukaryotic translation initiation factor 3 (eIF-3) complex, which is involved in protein synthesis of a specialized repertoire of mRNAs and, together with other initiation factors, stimulates binding of mRNA and methionyl-tRNAi to the 40S ribosome. The eIF-3 complex specifically targets and initiates translation of a subset of mRNAs involved in cell proliferation. The protein is Eukaryotic translation initiation factor 3 subunit I of Drosophila yakuba (Fruit fly).